We begin with the raw amino-acid sequence, 80 residues long: Conotoxin Lt6.2 (80 aa).

The N-terminal stretch at 1-24 (MKLTRVLIIAVLFLTAYQLTTVET) is a signal peptide. Residues 25-47 (YSRGKWMHRALRSTGKNPKVTRE) constitute a propeptide that is removed on maturation. 3 cysteine pairs are disulfide-bonded: Cys-48–Cys-62, Cys-55–Cys-66, and Cys-61–Cys-73.

The protein belongs to the conotoxin O1 superfamily. In terms of tissue distribution, expressed by the venom duct.

The protein localises to the secreted. This is Conotoxin Lt6.2 from Conus litteratus (Lettered cone).